A 423-amino-acid chain; its full sequence is RNA polymerase sigma factor SigA (423 aa).

Residues 1–76 are disordered; it reads MKKSKRKNAQ…EEDLPIPKIS (76 aa). The span at 21 to 70 shows a compositional bias: acidic residues; that stretch reads VQEEAEELPEFPEGEPDPDLEDPDLALEDDLLDLPEEGEGLDLEEEEEDL. The tract at residues 78 to 113 is sigma-70 factor domain-1; that stretch reads SDPVRQYLHEIGQVPLLTLEEEVELARKVEEGMEAI. Positions 187-257 are sigma-70 factor domain-2; it reads LIEANLRLVV…NRAIADQART (71 aa). The Interaction with polymerase core subunit RpoC signature appears at 211–214; the sequence is DLIQ. The tract at residues 266 to 344 is sigma-70 factor domain-3; that stretch reads ETINKLSRTA…DEHLPSPVDA (79 aa). A sigma-70 factor domain-4 region spans residues 357-409; that stretch reads ALSKLSEREAMVLKLRKGLIDGREHTLEEVGAFFGVTRERIRQIENKALRKLK. A DNA-binding region (H-T-H motif) is located at residues 383 to 402; it reads LEEVGAFFGVTRERIRQIEN.

Belongs to the sigma-70 factor family. RpoD/SigA subfamily. Interacts transiently with the RNA polymerase catalytic core formed by RpoA, RpoB, RpoC and RpoZ (2 alpha, 1 beta, 1 beta' and 1 omega subunit) to form the RNA polymerase holoenzyme that can initiate transcription.

It is found in the cytoplasm. Its function is as follows. Sigma factors are initiation factors that promote the attachment of RNA polymerase to specific initiation sites and are then released. This sigma factor is the primary sigma factor during exponential growth. The sequence is that of RNA polymerase sigma factor SigA from Thermus thermophilus (strain ATCC BAA-163 / DSM 7039 / HB27).